We begin with the raw amino-acid sequence, 117 residues long: Large ribosomal subunit protein uL18 (117 aa).

The protein belongs to the universal ribosomal protein uL18 family. In terms of assembly, part of the 50S ribosomal subunit; part of the 5S rRNA/L5/L18/L25 subcomplex. Contacts the 5S and 23S rRNAs.

Functionally, this is one of the proteins that bind and probably mediate the attachment of the 5S RNA into the large ribosomal subunit, where it forms part of the central protuberance. This chain is Large ribosomal subunit protein uL18, found in Phytoplasma mali (strain AT).